Reading from the N-terminus, the 92-residue chain is PqqA binding protein (92 aa).

This sequence belongs to the PqqD family. As to quaternary structure, monomer. Interacts with PqqE.

Its pathway is cofactor biosynthesis; pyrroloquinoline quinone biosynthesis. Functionally, functions as a PqqA binding protein and presents PqqA to PqqE, in the pyrroloquinoline quinone (PQQ) biosynthetic pathway. This is PqqA binding protein from Klebsiella pneumoniae (strain 342).